The following is a 456-amino-acid chain: Acid sphingomyelinase-like phosphodiesterase 3b (456 aa).

The first 18 residues, 1 to 18, serve as a signal peptide directing secretion; it reads MTLLGWLIFLAPWGVAGA. Residues D28 and H30 each coordinate Zn(2+). A glycan (N-linked (GlcNAc...) asparagine) is linked at N34. C45 and C64 are oxidised to a cystine. A glycan (N-linked (GlcNAc...) asparagine) is linked at N72. D93 provides a ligand contact to Zn(2+). An N-linked (GlcNAc...) asparagine glycan is attached at N100. N134 provides a ligand contact to Zn(2+). N-linked (GlcNAc...) asparagine glycosylation is found at N164 and N223. 3 residues coordinate Zn(2+): H236, H277, and H279. 2 disulfide bridges follow: C405-C409 and C415-C428.

Belongs to the acid sphingomyelinase family. In terms of assembly, interacts with TLR4, TLR7, TLR8 and TLR9. Zn(2+) is required as a cofactor. N-glycosylated. In terms of tissue distribution, macrophages and dendritic cells.

The protein resides in the secreted. Its subcellular location is the cell membrane. Functionally, lipid-modulating phosphodiesterase. Active on the surface of macrophages and dendritic cells and strongly influences macrophage lipid composition and membrane fluidity. Acts as a negative regulator of Toll-like receptor signaling. Has in vitro phosphodiesterase activity, but the physiological substrate is unknown. Lacks activity with phosphocholine-containing lipids, but can cleave CDP-choline, and can release phosphate from ATP and ADP (in vitro). The polypeptide is Acid sphingomyelinase-like phosphodiesterase 3b (Smpdl3b) (Mus musculus (Mouse)).